Here is a 321-residue protein sequence, read N- to C-terminus: MVCKVCGQKAQVEMRSRGLALCREHYLDWFVKETERAIRRHRMLLPGERVLVAVSGGKDSLALWDVLSRLGYQAVGLHIELGIGEYSKRSLEVTQAFARERGLELLVVDLKEAYGFGVPELARLSGRVACSACGLSKRYIINQVAVEEGFRVVATGHNLDDEAAVLFGNLLNPQEETLSRQGPVLPEKPGLAARVKPFYRFSEREVLSYTLLRGIRYLHEECPNAKGAKSLLYKEALNLVERSMPGAKLRFLDGFLEKIRPRLDVGEEVALRECERCGYPTTGAVCAFCRMWDAVYRRAKKRKLLPEEVSFRPRVKPLRAG.

Residues cysteine 3, cysteine 6, cysteine 22, and histidine 25 each contribute to the Zn(2+) site. ATP contacts are provided by residues 53–55 (AVS), aspartate 59, and isoleucine 79. Cysteine 130 and cysteine 133 together coordinate [4Fe-4S] cluster. Residue lysine 137 forms a Glycyl lysine isopeptide (Lys-Gly) (interchain with G-Cter in TtuB) linkage. Residues glycine 156 and aspartate 161 each contribute to the ATP site. Cysteine 222 contributes to the [4Fe-4S] cluster binding site. Glycyl lysine isopeptide (Lys-Gly) (interchain with G-Cter in TtuB) cross-links involve residues lysine 226 and lysine 229. Zn(2+) contacts are provided by cysteine 274, cysteine 277, cysteine 286, and cysteine 289.

It belongs to the TtcA family. TtuA subfamily. Homodimer. Is able to form a heterocomplex with TtuB. It depends on [4Fe-4S] cluster as a cofactor. Requires Mg(2+) as cofactor. Post-translationally, conjugated to TtuB via covalent linkages involving Lys-137, Lys-226 and Lys-229.

The enzyme catalyses [TtuB sulfur-carrier protein]-C-terminal-Gly-aminoethanethioate + 5-methyluridine(54) in tRNA + ATP + H2O = [TtuB sulfur-carrier protein]-C-terminal Gly-Gly + 5-methyl-2-thiouridine(54) in tRNA + AMP + diphosphate + H(+). Its pathway is tRNA modification. Its activity is regulated as follows. Enzymatic activity may be regulated by TtuB conjugation. Its function is as follows. Catalyzes the ATP-dependent 2-thiolation of 5-methyluridine residue at position 54 in the T loop of tRNAs, leading to 5-methyl-2-thiouridine (m(5)s(2)U or s(2)T). This modification allows thermal stabilization of tRNAs in thermophilic microorganisms, and is required for cell growth at high temperatures. TtuA transfers the S atom from the thiocarboxylated C-terminus of TtuB to tRNA. This is tRNA-5-methyluridine(54) 2-sulfurtransferase from Thermus thermophilus (strain ATCC BAA-163 / DSM 7039 / HB27).